The sequence spans 508 residues: uncharacterized protein (508 aa).

The next 12 membrane-spanning stretches (helical) occupy residues 65-87 (IFPV…SYAV), 104-124 (WSGT…SLLL), 136-156 (FLVI…PGFI), 160-180 (VLLG…TAQW), 192-212 (VWVA…YGLA), 224-244 (LIFI…LAVV), 292-312 (TWIM…IGTF), 333-353 (LPAG…SLFI), 357-377 (MVLA…LSFA), 384-404 (LAGY…FAII), 416-436 (TVGV…PQTF), and 450-470 (TMVG…YVNW).

This sequence belongs to the major facilitator superfamily. Allantoate permease family.

It localises to the endoplasmic reticulum. The protein localises to the golgi apparatus. The protein resides in the membrane. This is an uncharacterized protein from Schizosaccharomyces pombe (strain 972 / ATCC 24843) (Fission yeast).